A 367-amino-acid polypeptide reads, in one-letter code: uncharacterized protein (367 aa).

Belongs to the mimivirus L17x/L18x family.

This is an uncharacterized protein from Acanthamoeba polyphaga mimivirus (APMV).